Here is a 155-residue protein sequence, read N- to C-terminus: Protein-export protein SecB (155 aa).

Belongs to the SecB family. As to quaternary structure, homotetramer, a dimer of dimers. One homotetramer interacts with 1 SecA dimer.

The protein resides in the cytoplasm. In terms of biological role, one of the proteins required for the normal export of preproteins out of the cell cytoplasm. It is a molecular chaperone that binds to a subset of precursor proteins, maintaining them in a translocation-competent state. It also specifically binds to its receptor SecA. This is Protein-export protein SecB from Paramagnetospirillum magneticum (strain ATCC 700264 / AMB-1) (Magnetospirillum magneticum).